A 231-amino-acid chain; its full sequence is Putative N-acetylmannosamine-6-phosphate 2-epimerase (231 aa).

The protein belongs to the NanE family.

The enzyme catalyses an N-acyl-D-glucosamine 6-phosphate = an N-acyl-D-mannosamine 6-phosphate. It functions in the pathway amino-sugar metabolism; N-acetylneuraminate degradation; D-fructose 6-phosphate from N-acetylneuraminate: step 3/5. Its function is as follows. Converts N-acetylmannosamine-6-phosphate (ManNAc-6-P) to N-acetylglucosamine-6-phosphate (GlcNAc-6-P). This Latilactobacillus sakei subsp. sakei (strain 23K) (Lactobacillus sakei subsp. sakei) protein is Putative N-acetylmannosamine-6-phosphate 2-epimerase.